The chain runs to 433 residues: Glutamate-1-semialdehyde 2,1-aminomutase (433 aa).

Lysine 272 is modified (N6-(pyridoxal phosphate)lysine).

It belongs to the class-III pyridoxal-phosphate-dependent aminotransferase family. HemL subfamily. In terms of assembly, homodimer. Pyridoxal 5'-phosphate is required as a cofactor.

The protein localises to the cytoplasm. The catalysed reaction is (S)-4-amino-5-oxopentanoate = 5-aminolevulinate. It functions in the pathway porphyrin-containing compound metabolism; protoporphyrin-IX biosynthesis; 5-aminolevulinate from L-glutamyl-tRNA(Glu): step 2/2. The chain is Glutamate-1-semialdehyde 2,1-aminomutase from Magnetococcus marinus (strain ATCC BAA-1437 / JCM 17883 / MC-1).